The sequence spans 31 residues: Cytochrome b6-f complex subunit 6 (31 aa).

A helical transmembrane segment spans residues 4–24 (LLSYFGFLFAILTLTSVLFIG).

The protein belongs to the PetL family. In terms of assembly, the 4 large subunits of the cytochrome b6-f complex are cytochrome b6, subunit IV (17 kDa polypeptide, PetD), cytochrome f and the Rieske protein, while the 4 small subunits are PetG, PetL, PetM and PetN. The complex functions as a dimer.

It localises to the plastid. The protein localises to the chloroplast thylakoid membrane. Its function is as follows. Component of the cytochrome b6-f complex, which mediates electron transfer between photosystem II (PSII) and photosystem I (PSI), cyclic electron flow around PSI, and state transitions. PetL is important for photoautotrophic growth as well as for electron transfer efficiency and stability of the cytochrome b6-f complex. This chain is Cytochrome b6-f complex subunit 6, found in Angiopteris evecta (Mule's foot fern).